We begin with the raw amino-acid sequence, 230 residues long: Thymidylate kinase (230 aa).

20 to 27 (GGEGSGKS) contributes to the ATP binding site.

Belongs to the thymidylate kinase family.

The catalysed reaction is dTMP + ATP = dTDP + ADP. Its function is as follows. Phosphorylation of dTMP to form dTDP in both de novo and salvage pathways of dTTP synthesis. The sequence is that of Thymidylate kinase from Nitrobacter hamburgensis (strain DSM 10229 / NCIMB 13809 / X14).